A 355-amino-acid polypeptide reads, in one-letter code: Ferrochelatase (355 aa).

Residues His-214 and Glu-295 each coordinate Fe cation.

This sequence belongs to the ferrochelatase family.

It localises to the cytoplasm. The enzyme catalyses heme b + 2 H(+) = protoporphyrin IX + Fe(2+). It participates in porphyrin-containing compound metabolism; protoheme biosynthesis; protoheme from protoporphyrin-IX: step 1/1. In terms of biological role, catalyzes the ferrous insertion into protoporphyrin IX. This chain is Ferrochelatase, found in Burkholderia thailandensis (strain ATCC 700388 / DSM 13276 / CCUG 48851 / CIP 106301 / E264).